Reading from the N-terminus, the 207-residue chain is rRNA N(6)-adenosine-methyltransferase METTL5 (207 aa).

S-adenosyl-L-methionine is bound by residues Q25, T28, G56, C59, V61, D78, and 105-106 (DV).

The protein belongs to the methyltransferase superfamily. PrmA family.

The protein resides in the nucleus. The protein localises to the presynapse. Its subcellular location is the postsynapse. It catalyses the reaction adenosine(1832) in 18S rRNA + S-adenosyl-L-methionine = N(6)-methyladenosine(1832) in 18S rRNA + S-adenosyl-L-homocysteine + H(+). RRNA N6-adenosine-methyltransferase activity is inhibited by zinc. In terms of biological role, catalytic subunit of a heterodimer with TRMT112, which specifically methylates the 6th position of adenine in position 1832 of 18S rRNA. N6-methylation of adenine(1832) in 18S rRNA resides in the decoding center of 18S rRNA and is required for translation and embryonic stem cells (ESCs) pluripotency and differentiation. The protein is rRNA N(6)-adenosine-methyltransferase METTL5 of Danio rerio (Zebrafish).